Consider the following 64-residue polypeptide: Prokaryotic ubiquitin-like protein Pup (64 aa).

Positions 1–37 (MAQEQTKRGGGGGDDDDIAGSTAAGQERREKLTEETD) are disordered. The interval 21 to 58 (STAAGQERREKLTEETDDLLDEIDDVLEENAEDFVRAY) is ARC ATPase binding. The stretch at 23–52 (AAGQERREKLTEETDDLLDEIDDVLEENAE) forms a coiled coil. Gln64 bears the Deamidated glutamine mark. Gln64 is covalently cross-linked (Isoglutamyl lysine isopeptide (Gln-Lys) (interchain with K-? in acceptor proteins)).

Belongs to the prokaryotic ubiquitin-like protein family. In terms of assembly, strongly interacts with the proteasome-associated ATPase ARC through a hydrophobic interface; the interacting region of Pup lies in its C-terminal half. There is one Pup binding site per ARC hexamer ring. Post-translationally, is modified by deamidation of its C-terminal glutamine to glutamate by the deamidase Dop, a prerequisite to the subsequent pupylation process.

It functions in the pathway protein degradation; proteasomal Pup-dependent pathway. In terms of biological role, protein modifier that is covalently attached to lysine residues of substrate proteins, thereby targeting them for proteasomal degradation. The tagging system is termed pupylation. The protein is Prokaryotic ubiquitin-like protein Pup of Mycobacterium tuberculosis (strain ATCC 25177 / H37Ra).